A 283-amino-acid chain; its full sequence is Pantothenate synthetase (283 aa).

30 to 37 (MGYYHSGH) contacts ATP. Catalysis depends on His-37, which acts as the Proton donor. A (R)-pantoate-binding site is contributed by Gln-61. Beta-alanine is bound at residue Gln-61. 147–150 (GQKD) lines the ATP pocket. Gln-153 provides a ligand contact to (R)-pantoate. ATP contacts are provided by residues Val-176 and 184–187 (MSSR).

Belongs to the pantothenate synthetase family. As to quaternary structure, homodimer.

The protein localises to the cytoplasm. The enzyme catalyses (R)-pantoate + beta-alanine + ATP = (R)-pantothenate + AMP + diphosphate + H(+). The protein operates within cofactor biosynthesis; (R)-pantothenate biosynthesis; (R)-pantothenate from (R)-pantoate and beta-alanine: step 1/1. Its function is as follows. Catalyzes the condensation of pantoate with beta-alanine in an ATP-dependent reaction via a pantoyl-adenylate intermediate. The sequence is that of Pantothenate synthetase from Nitratidesulfovibrio vulgaris (strain DSM 19637 / Miyazaki F) (Desulfovibrio vulgaris).